Reading from the N-terminus, the 297-residue chain is Nucleotide-binding protein BURPS668_0577 (297 aa).

8 to 15 (GISGSGKS) contacts ATP. Residue 57 to 60 (DARS) coordinates GTP.

The protein belongs to the RapZ-like family.

Functionally, displays ATPase and GTPase activities. This is Nucleotide-binding protein BURPS668_0577 from Burkholderia pseudomallei (strain 668).